Here is a 318-residue protein sequence, read N- to C-terminus: Ribose-phosphate pyrophosphokinase (318 aa).

Residues 40-42 (DGE) and 99-100 (RQ) contribute to the ATP site. Residues H134 and D173 each coordinate Mg(2+). The active site involves K196. D-ribose 5-phosphate is bound by residues R198, D222, and 226–230 (DTAGT).

Belongs to the ribose-phosphate pyrophosphokinase family. Class I subfamily. Homohexamer. It depends on Mg(2+) as a cofactor.

The protein localises to the cytoplasm. The enzyme catalyses D-ribose 5-phosphate + ATP = 5-phospho-alpha-D-ribose 1-diphosphate + AMP + H(+). It functions in the pathway metabolic intermediate biosynthesis; 5-phospho-alpha-D-ribose 1-diphosphate biosynthesis; 5-phospho-alpha-D-ribose 1-diphosphate from D-ribose 5-phosphate (route I): step 1/1. Its function is as follows. Involved in the biosynthesis of the central metabolite phospho-alpha-D-ribosyl-1-pyrophosphate (PRPP) via the transfer of pyrophosphoryl group from ATP to 1-hydroxyl of ribose-5-phosphate (Rib-5-P). This is Ribose-phosphate pyrophosphokinase from Burkholderia pseudomallei (strain K96243).